The sequence spans 235 residues: Thaumatin I (235 aa).

The first 22 residues, Met1–Ala22, serve as a signal peptide directing secretion. Intrachain disulfides connect Cys31–Cys226, Cys78–Cys88, Cys93–Cys99, Cys143–Cys215, Cys148–Cys199, Cys156–Cys167, Cys171–Cys180, and Cys181–Cys186. Positions Leu230–Glu235 are cleaved as a propeptide — removed in mature form.

This sequence belongs to the thaumatin family.

It is found in the cytoplasmic vesicle. Functionally, taste-modifying protein; intensely sweet-tasting. It is 100000 times sweeter than sucrose on a molar basis. The protein is Thaumatin I of Thaumatococcus daniellii (Katemfe).